Consider the following 143-residue polypeptide: UPF0651 protein P31B10.02, mitochondrial (143 aa).

One can recognise an Oxidoreductase-like domain in the interval 48–93 (IYDGIRVPPKPEEPLNCCQSGCAICVWDVYADDLEEYNRARRKAKR).

Belongs to the UPF0651 family.

The protein localises to the mitochondrion. This Schizosaccharomyces pombe (strain 972 / ATCC 24843) (Fission yeast) protein is UPF0651 protein P31B10.02, mitochondrial.